A 114-amino-acid chain; its full sequence is UPF0342 protein SH1117 (114 aa).

Belongs to the UPF0342 family.

This Staphylococcus haemolyticus (strain JCSC1435) protein is UPF0342 protein SH1117.